The sequence spans 261 residues: Chanoclavine-I dehydrogenase easD (261 aa).

The signal sequence occupies residues 1-20 (MPSMTSKVFAITGGASGIGA). Isoleucine 18 serves as a coordination point for NADP(+). Asparagine 43 carries N-linked (GlcNAc...) asparagine glycosylation. Residues aspartate 66, arginine 132, tyrosine 166, lysine 170, and threonine 201 each contribute to the NADP(+) site. Tyrosine 166 acts as the Proton donor in catalysis. Catalysis depends on lysine 170, which acts as the Lowers pKa of active site Tyr.

This sequence belongs to the short-chain dehydrogenases/reductases (SDR) family. Homotetramer.

The catalysed reaction is chanoclavine-I + NAD(+) = chanoclavine-I aldehyde + NADH + H(+). Its pathway is alkaloid biosynthesis; ergot alkaloid biosynthesis. Chanoclavine-I dehydrogenase; part of the gene cluster that mediates the biosynthesis of fungal ergot alkaloid. DmaW catalyzes the first step of ergot alkaloid biosynthesis by condensing dimethylallyl diphosphate (DMAP) and tryptophan to form 4-dimethylallyl-L-tryptophan. The second step is catalyzed by the methyltransferase easF that methylates 4-dimethylallyl-L-tryptophan in the presence of S-adenosyl-L-methionine, resulting in the formation of 4-dimethylallyl-L-abrine. The catalase easC and the FAD-dependent oxidoreductase easE then transform 4-dimethylallyl-L-abrine to chanoclavine-I which is further oxidized by easD in the presence of NAD(+), resulting in the formation of chanoclavine-I aldehyde. Agroclavine dehydrogenase easG then mediates the conversion of chanoclavine-I aldehyde to agroclavine via a non-enzymatic adduct reaction: the substrate is an iminium intermediate that is formed spontaneously from chanoclavine-I aldehyde in the presence of glutathione. The presence of easA is not required to complete this reaction. Further conversion of agroclavine to paspalic acid is a two-step process involving oxidation of agroclavine to elymoclavine and of elymoclavine to paspalic acid, the second step being performed by the elymoclavine oxidase cloA. Paspalic acid is then further converted to D-lysergic acid. Ergopeptines are assembled from D-lysergic acid and three different amino acids by the D-lysergyl-peptide-synthetases composed each of a monomudular and a trimodular nonribosomal peptide synthetase subunit. LpsB and lpsC encode the monomodular subunits responsible for D-lysergic acid activation and incorporation into the ergopeptine backbone. LpsA1 and A2 subunits encode the trimodular nonribosomal peptide synthetase assembling the tripeptide portion of ergopeptines. LpsA1 is responsible for formation of the major ergopeptine, ergotamine, and lpsA2 for alpha-ergocryptine, the minor ergopeptine of the total alkaloid mixture elaborated by C.purpurea. D-lysergyl-tripeptides are assembled by the nonribosomal peptide synthetases and released as N-(D-lysergyl-aminoacyl)-lactams. Cyclolization of the D-lysergyl-tripeptides is performed by the Fe(2+)/2-ketoglutarate-dependent dioxygenase easH which introduces a hydroxyl group into N-(D-lysergyl-aminoacyl)-lactam at alpha-C of the aminoacyl residue followed by spontaneous condensation with the terminal lactam carbonyl group. In Claviceps purpurea (strain 20.1) (Ergot fungus), this protein is Chanoclavine-I dehydrogenase easD.